The primary structure comprises 313 residues: Fe-S cluster assembly protein dre2 (313 aa).

2 disordered regions span residues 1–25 and 151–187; these read MSIT…SQKR and GRKK…AQNN. An N-terminal SAM-like domain region spans residues 20–145; the sequence is NGSQKRNLLL…FEKPVQEAAV (126 aa). A linker region spans residues 146 to 203; sequence PLKLGGRKKKDKTNGVNGVQNGVATNGASTNGVGMFDPAQNNDDELIDEDALLSDDDL. The span at 159–177 shows a compositional bias: polar residues; the sequence is NGVNGVQNGVATNGASTNG. 4 residues coordinate [2Fe-2S] cluster: C213, C225, C228, and C230. Residues 213-230 are fe-S binding site A; the sequence is CVPETAKKRRRPCKDCTC. Residues C276, C279, C287, and C290 each contribute to the [4Fe-4S] cluster site. 2 short sequence motifs (cx2C motif) span residues 276-279 and 287-290; these read CNSC and CSSC. Residues 276 to 290 are fe-S binding site B; that stretch reads CNSCSLGDAFRCSSC.

It belongs to the anamorsin family. In terms of assembly, monomer. Interacts with tah18. Interacts with mia40. It depends on [2Fe-2S] cluster as a cofactor. [4Fe-4S] cluster is required as a cofactor.

The protein resides in the cytoplasm. It is found in the mitochondrion intermembrane space. Its function is as follows. Component of the cytosolic iron-sulfur (Fe-S) protein assembly (CIA) machinery required for the maturation of extramitochondrial Fe-S proteins. Part of an electron transfer chain functioning in an early step of cytosolic Fe-S biogenesis, facilitating the de novo assembly of a [4Fe-4S] cluster on the scaffold complex cfd1-nbp35. Electrons are transferred to dre2 from NADPH via the FAD- and FMN-containing protein tah18. Tah18-dre2 are also required for the assembly of the diferric tyrosyl radical cofactor of ribonucleotide reductase (RNR), probably by providing electrons for reduction during radical cofactor maturation in the catalytic small subunit rnr2. This is Fe-S cluster assembly protein dre2 from Aspergillus oryzae (strain ATCC 42149 / RIB 40) (Yellow koji mold).